We begin with the raw amino-acid sequence, 190 residues long: Hypoxanthine/guanine phosphoribosyltransferase (190 aa).

Belongs to the purine/pyrimidine phosphoribosyltransferase family. Archaeal HPRT subfamily. Homodimer.

The protein localises to the cytoplasm. The catalysed reaction is IMP + diphosphate = hypoxanthine + 5-phospho-alpha-D-ribose 1-diphosphate. It catalyses the reaction GMP + diphosphate = guanine + 5-phospho-alpha-D-ribose 1-diphosphate. It functions in the pathway purine metabolism; IMP biosynthesis via salvage pathway; IMP from hypoxanthine: step 1/1. Its function is as follows. Catalyzes a salvage reaction resulting in the formation of IMP that is energically less costly than de novo synthesis. The protein is Hypoxanthine/guanine phosphoribosyltransferase of Methanobacterium paludis (strain DSM 25820 / JCM 18151 / SWAN1).